Consider the following 430-residue polypeptide: Asparagine--tRNA ligase (430 aa).

This sequence belongs to the class-II aminoacyl-tRNA synthetase family. In terms of assembly, homodimer.

It is found in the cytoplasm. It carries out the reaction tRNA(Asn) + L-asparagine + ATP = L-asparaginyl-tRNA(Asn) + AMP + diphosphate + H(+). This Staphylococcus aureus (strain bovine RF122 / ET3-1) protein is Asparagine--tRNA ligase.